The sequence spans 293 residues: 4-hydroxybenzoate octaprenyltransferase (293 aa).

Helical transmembrane passes span 19-39, 43-63, 95-115, 135-155, 158-178, 209-229, 231-251, and 266-286; these read PIGI…ASNG, WLIL…GCVV, LLAA…NALV, FFAI…PMSY, LWGE…FWAI, LTAI…VGAL, DFSG…VYHL, and FLHN…HFLL.

It belongs to the UbiA prenyltransferase family. Requires Mg(2+) as cofactor.

It is found in the cell inner membrane. The catalysed reaction is all-trans-octaprenyl diphosphate + 4-hydroxybenzoate = 4-hydroxy-3-(all-trans-octaprenyl)benzoate + diphosphate. The protein operates within cofactor biosynthesis; ubiquinone biosynthesis. Catalyzes the prenylation of para-hydroxybenzoate (PHB) with an all-trans polyprenyl group. Mediates the second step in the final reaction sequence of ubiquinone-8 (UQ-8) biosynthesis, which is the condensation of the polyisoprenoid side chain with PHB, generating the first membrane-bound Q intermediate 3-octaprenyl-4-hydroxybenzoate. The chain is 4-hydroxybenzoate octaprenyltransferase from Thiobacillus denitrificans (strain ATCC 25259 / T1).